A 171-amino-acid chain; its full sequence is RNA silencing suppressor p19 (171 aa).

Basic and acidic residues predominate over residues 1-15 (MERAIPGNDTREPAY). The disordered stretch occupies residues 1-32 (MERAIPGNDTREPAYGERWNGGPGGSTSPFQL).

Belongs to the tombusvirus protein p19 family. As to quaternary structure, homodimer.

Functionally, viral suppressor of RNA silencing which binds specifically to silencing RNAs (siRNAs). Acts as a molecular caliper to specifically select siRNAs based on the length of the duplex region of the RNA. This is RNA silencing suppressor p19 from Capsicum annuum (Capsicum pepper).